The following is a 476-amino-acid chain: MAATTTILSSAAPTPLTAPPRARARAPAARRRRLRARDILGAALGLANGGASAALAAPLSYEETLRLSTDSGGGGGGGGEFALPDLGLGGVLDFVAQNPLVAAAGVAAVALPLVLAQVLGGASKPYGVVSAAAAYRALVEEPGAQLVDIRPPGDARQSGAPDLREAKKKAAAVPYDGEDKNGFLKKLSLRFKDPENTTLVILDKFDGNSELVAELVTANGYKAAFAVKDGAEGRRGWLSSSLPWTAPKKGFSLSDLIGDGTDGLPVTLGLAAATGLGILAYTEIETVLQFLGSAAIVQLVASKLIYAEDRKRTLKQIDDFFNKKVAPKELVDEIKEISQALLPSTGTKSQPAITEAAPATAEAAPAAATATAAPPAAPVEETSTEAAPAEPTPLSPYTNYPDLKPPSSPSPLAPAEATKNESESESAATESAPAVNSAPVAEAAPEAAPPAAPRPLSPYPNYPDLKPPSSPSPSAP.

Residues 1-21 (MAATTTILSSAAPTPLTAPPR) constitute a chloroplast transit peptide. The disordered stretch occupies residues 1-29 (MAATTTILSSAAPTPLTAPPRARARAPAA). The segment covering 11–21 (AAPTPLTAPPR) has biased composition (low complexity). The transit peptide at 22 to 58 (ARARAPAARRRRLRARDILGAALGLANGGASAALAAP) directs the protein to the thylakoid. Residues 100 to 120 (LVAAAGVAAVALPLVLAQVLG) traverse the membrane as a helical segment. A Rhodanese domain is found at 140 to 246 (EEPGAQLVDI…WLSSSLPWTA (107 aa)). The next 2 membrane-spanning stretches (helical) occupy residues 264-284 (LPVT…YTEI) and 287-307 (VLQF…LIYA). The segment at 342–476 (LPSTGTKSQP…PPSSPSPSAP (135 aa)) is disordered. A compositionally biased stretch (low complexity) spans 351 to 389 (PAITEAAPATAEAAPAAATATAAPPAAPVEETSTEAAPA). A compositionally biased stretch (pro residues) spans 403–412 (LKPPSSPSPL). A compositionally biased stretch (low complexity) spans 425 to 446 (ESAATESAPAVNSAPVAEAAPE). Residues 447–476 (AAPPAAPRPLSPYPNYPDLKPPSSPSPSAP) show a composition bias toward pro residues.

As to quaternary structure, component of high molecular weight thylakoid LFNRs-containing protein complexes containing LIR1, LFNR1, LFNR2, TIC62 and TROL proteins.

The protein resides in the plastid. The protein localises to the chloroplast thylakoid membrane. Rhodanese domain-containing protein required for anchoring ferredoxin--NADP reductase to the thylakoid membranes and sustaining efficient linear electron flow (LEF). The sequence is that of Protein THYLAKOID RHODANESE-LIKE, chloroplastic from Oryza sativa subsp. indica (Rice).